The following is a 186-amino-acid chain: MSRSKEVSPNLSQQKRGDVRSAGISGFSSPIYRGRLNHSASAELQEGYRILTGGQKANIISDKDLFKAIHSCGLHTSEEEVNDLLRVVHQDERTLGLEFPEFMMLMTKGIDEASIAEMRRPFSVLDKAKTGVITKKQFTELFVSSGEHSSAEELEELMLLAETSEELEVVDYNKLINELAILLNKM.

Residues 1–23 (MSRSKEVSPNLSQQKRGDVRSAG) form a disordered region. EF-hand domains lie at 41 to 76 (SAELQEGYRILTGGQKANIISDKDLFKAIHSCGLHT), 77 to 112 (SEEEVNDLLRVVHQDERTLGLEFPEFMMLMTKGIDE), 113 to 148 (ASIAEMRRPFSVLDKAKTGVITKKQFTELFVSSGEH), and 149 to 186 (SSAEELEELMLLAETSEELEVVDYNKLINELAILLNKM). Ca(2+) contacts are provided by glutamate 98, aspartate 126, and threonine 130.

The polypeptide is EF-hand protein 5 (Leishmania tarentolae (Sauroleishmania tarentolae)).